The chain runs to 425 residues: Inner membrane protein YqcE (425 aa).

Over 1–8 (MQHNSYRR) the chain is Cytoplasmic. Residues 9–29 (WITLAIISFSGGVSFDLAYLR) form a helical membrane-spanning segment. Over 30–48 (YIYQIPMAKFMGFSNTEIG) the chain is Periplasmic. A helical transmembrane segment spans residues 49 to 69 (LIMSTFGIAAIILYAPSGVIA). The Cytoplasmic segment spans residues 70 to 75 (DKFSHR). A run of 2 helical transmembrane segments spans residues 76 to 96 (KMITSAMIITGLLGLLMATYP) and 97 to 117 (PLWVMLCIQIAFAITTILMLW). Residues 118–138 (SVSIKAASLLGDHSEQGKIMG) lie on the Cytoplasmic side of the membrane. A helical transmembrane segment spans residues 139–159 (WMEGLRGVGVMSLAVFTMWVF). Residues 160–171 (SRFAPDDSTSLK) are Periplasmic-facing. A helical transmembrane segment spans residues 172–192 (TVIIIYSVVYILLGILCWFFV). At 193–219 (SDNNNLRSANNEEKQSFQLSDILAVLR) the chain is on the cytoplasmic side. Residues 220–240 (ISTTWYCSMVIFGVFTIYAIL) form a helical membrane-spanning segment. Over 241–259 (SYSTNYLTEMYGMSLVAAS) the chain is Periplasmic. Residues 260-280 (YMGIVINKIFRALCGPLGGII) traverse the membrane as a helical segment. At 281-291 (TTYSKVKSPTR) the chain is on the cytoplasmic side. Residues 292-312 (VIQILSVLGLLTLTALLVTNS) traverse the membrane as a helical segment. Residue Asn313 is a topological domain, periplasmic. The helical transmembrane segment at 314-334 (PQSVAMGIGLILLLGFTCYAS) threads the bilayer. The Cytoplasmic segment spans residues 335 to 354 (RGLYWACPGEARTPSYIMGT). A helical membrane pass occupies residues 355 to 375 (TVGICSVIGFLPDVFVYPIIG). The Periplasmic portion of the chain corresponds to 376–388 (HWQDTLPAAEAYR). Residues 389 to 409 (NMWLMGMAALGMVIVFTFLLF) form a helical membrane-spanning segment. Residues 410 to 425 (QKIRTADSAPAMASSK) lie on the Cytoplasmic side of the membrane.

It to E.coli YihN.

Its subcellular location is the cell inner membrane. In Escherichia coli (strain K12), this protein is Inner membrane protein YqcE (yqcE).